The following is a 252-amino-acid chain: MFKVVICDDERIIREGLKQIIPWGDYHFNTIYTAKDGVEALSLIQQHQPELVITDIRMPRKNGVDLLNDIALLDCNVIILSSYDDFEYMKAGIQHHVLDYLLKPVDHAQLEVILGRLVRTLLEQQSQNGRSLASCHDAFQPLLKVEYDDYYVNQIVDQIKQSYQTKVTVSDLIQHIDVSESYAMRTFKDHVGITIVDYLNRYRILQSLQLLDRHYKHYEIADKVGFSEYKMFSYHFKKYLQMSPSDYCKQAK.

A Response regulatory domain is found at 3-118; the sequence is KVVICDDERI…QLEVILGRLV (116 aa). Asp-55 is modified (4-aspartylphosphate). The region spanning 153–250 is the HTH araC/xylS-type domain; sequence NQIVDQIKQS…QMSPSDYCKQ (98 aa). DNA-binding regions (H-T-H motif) lie at residues 170–191 and 217–240; these read SDLI…KDHV and HYEI…KKYL.

In terms of processing, phosphorylated by HptS.

The protein resides in the cytoplasm. Functionally, member of the two-component regulatory system HptS/HptR that regulates genes involved in hexose phosphate transport system in response to changes in extracellular phosphate sources. Activates uhpT expression to facilitate glucose-6-phosphate/G6P utilization by directly binding to its promoter. Antagonizes CcpA-dependent transcription of a subset of CcpA-regulated genes involved in antibiotic susceptibility. This Staphylococcus aureus (strain Mu50 / ATCC 700699) protein is Transcriptional regulatory protein HptR (hptR).